Reading from the N-terminus, the 1343-residue chain is DNA-directed RNA polymerase subunit beta (1343 aa).

This sequence belongs to the RNA polymerase beta chain family. As to quaternary structure, the RNAP catalytic core consists of 2 alpha, 1 beta, 1 beta' and 1 omega subunit. When a sigma factor is associated with the core the holoenzyme is formed, which can initiate transcription.

The enzyme catalyses RNA(n) + a ribonucleoside 5'-triphosphate = RNA(n+1) + diphosphate. Functionally, DNA-dependent RNA polymerase catalyzes the transcription of DNA into RNA using the four ribonucleoside triphosphates as substrates. This chain is DNA-directed RNA polymerase subunit beta, found in Shewanella loihica (strain ATCC BAA-1088 / PV-4).